Consider the following 474-residue polypeptide: 1-aminocyclopropane-1-carboxylate synthase 4 (474 aa).

Substrate is bound by residues glutamate 47 and tyrosine 85. Lysine 273 carries the post-translational modification N6-(pyridoxal phosphate)lysine.

It belongs to the class-I pyridoxal-phosphate-dependent aminotransferase family. In terms of assembly, homodimer and heterodimer. In vivo, the relevance of heterodimerization with other ACS enzymes is however unsure. Interacts with XBAT32. Interacts (via its C-terminal region) with ETO1 and EOL1. It depends on pyridoxal 5'-phosphate as a cofactor. Post-translationally, ubiquitinated by XBAT32. Ubiquitination probably leads to its subsequent degradation, thus controlling ethylene production. In terms of tissue distribution, expressed in roots, leaves and flowers.

It carries out the reaction S-adenosyl-L-methionine = 1-aminocyclopropane-1-carboxylate + S-methyl-5'-thioadenosine + H(+). It participates in alkene biosynthesis; ethylene biosynthesis via S-adenosyl-L-methionine; ethylene from S-adenosyl-L-methionine: step 1/2. Functionally, 1-aminocyclopropane-1-carboxylate synthase (ACS) enzymes catalyze the conversion of S-adenosyl-L-methionine (SAM) into 1-aminocyclopropane-1-carboxylate (ACC), a direct precursor of ethylene. The sequence is that of 1-aminocyclopropane-1-carboxylate synthase 4 (ACS4) from Arabidopsis thaliana (Mouse-ear cress).